A 269-amino-acid chain; its full sequence is Diphthine synthase (269 aa).

S-adenosyl-L-methionine contacts are provided by residues Leu10, Asp87, Val90, 115–116 (SI), Leu166, Ala209, and His234.

Belongs to the diphthine synthase family. In terms of assembly, homodimer.

It catalyses the reaction 2-[(3S)-amino-3-carboxypropyl]-L-histidyl-[translation elongation factor 2] + 3 S-adenosyl-L-methionine = diphthine-[translation elongation factor 2] + 3 S-adenosyl-L-homocysteine + 3 H(+). It participates in protein modification; peptidyl-diphthamide biosynthesis. Functionally, S-adenosyl-L-methionine-dependent methyltransferase that catalyzes the trimethylation of the amino group of the modified target histidine residue in translation elongation factor 2 (EF-2), to form an intermediate called diphthine. The three successive methylation reactions represent the second step of diphthamide biosynthesis. The protein is Diphthine synthase of Pyrococcus furiosus (strain ATCC 43587 / DSM 3638 / JCM 8422 / Vc1).